A 93-amino-acid chain; its full sequence is Acylphosphatase (93 aa).

One can recognise an Acylphosphatase-like domain in the interval 6–93 (RARIVVSGRV…GDLGAFEIRF (88 aa)). Active-site residues include Arg-21 and Asn-39.

This sequence belongs to the acylphosphatase family.

The catalysed reaction is an acyl phosphate + H2O = a carboxylate + phosphate + H(+). The chain is Acylphosphatase (acyP) from Anaeromyxobacter dehalogenans (strain 2CP-C).